The following is a 1024-amino-acid chain: PH and SEC7 domain-containing protein 1 (1024 aa).

Disordered stretches follow at residues 25-98, 113-230, 246-401, and 430-536; these read WLPE…GAQS, PLNG…EVSS, SLDP…GPDS, and ASPG…LDST. Residues 71–95 are compositionally biased toward pro residues; that stretch reads RGPPSPRVAPSPWAPSSPTGQPPPG. A phosphoserine mark is found at S126 and S156. Residues 215-230 show a composition bias toward polar residues; the sequence is FLNQGDTWSSPREVSS. Positions 300–313 are enriched in acidic residues; that stretch reads DIDEVLAEREEADS. Positions 327 to 342 are enriched in pro residues; that stretch reads TAYPPAPRPGPLPGPH. Over residues 349–369 the composition is skewed to acidic residues; it reads NEDEDDDEAGGEEDVDDEVFE. Residues 445–463 are compositionally biased toward pro residues; sequence PPQPPAPRPDPPAPAPLAP. The region spanning 512 to 706 is the SEC7 domain; sequence GAAPLGSEPP…KALYSSIKNE (195 aa). A Phosphoserine modification is found at S720. A PH domain is found at 756-869; that stretch reads AVYKHGALVR…WITRINVVAA (114 aa). Residues 898–924 adopt a coiled-coil conformation; it reads LSQEEQVRTHEAKLKAMASELREHRAA. A disordered region spans residues 976–1024; that stretch reads ALAQAGSTEDGLPPSHSSPSLQPKPSSQPRAQRHSSEPRPGAGSGRRKP. Residues 987 to 1004 show a composition bias toward low complexity; the sequence is LPPSHSSPSLQPKPSSQP.

This sequence belongs to the PSD family. As to quaternary structure, interacts with ACTN1. Interacts (ARF6-bound form) with KCNK1; does not interact with KCNK1 in the absence of ARF6. As to expression, isoform 2 is expressed in the brain.

It localises to the cell membrane. The protein resides in the cell projection. It is found in the ruffle membrane. The protein localises to the cleavage furrow. Its function is as follows. Guanine nucleotide exchange factor for ARF6. Induces cytoskeletal remodeling. The chain is PH and SEC7 domain-containing protein 1 (PSD) from Homo sapiens (Human).